The chain runs to 240 residues: UDP-2,3-diacylglucosamine hydrolase (240 aa).

5 residues coordinate Mn(2+): D7, H9, D40, N78, and H113. Substrate is bound at residue 78-79 (NR). Substrate is bound by residues D121, S159, T163, K166, and H194. Positions 194 and 196 each coordinate Mn(2+).

Belongs to the LpxH family. Mn(2+) is required as a cofactor.

It localises to the cell inner membrane. The enzyme catalyses UDP-2-N,3-O-bis[(3R)-3-hydroxytetradecanoyl]-alpha-D-glucosamine + H2O = 2-N,3-O-bis[(3R)-3-hydroxytetradecanoyl]-alpha-D-glucosaminyl 1-phosphate + UMP + 2 H(+). It functions in the pathway glycolipid biosynthesis; lipid IV(A) biosynthesis; lipid IV(A) from (3R)-3-hydroxytetradecanoyl-[acyl-carrier-protein] and UDP-N-acetyl-alpha-D-glucosamine: step 4/6. In terms of biological role, hydrolyzes the pyrophosphate bond of UDP-2,3-diacylglucosamine to yield 2,3-diacylglucosamine 1-phosphate (lipid X) and UMP by catalyzing the attack of water at the alpha-P atom. Involved in the biosynthesis of lipid A, a phosphorylated glycolipid that anchors the lipopolysaccharide to the outer membrane of the cell. The chain is UDP-2,3-diacylglucosamine hydrolase from Stutzerimonas stutzeri (strain A1501) (Pseudomonas stutzeri).